The primary structure comprises 198 residues: Ribonuclease HII (198 aa).

One can recognise an RNase H type-2 domain in the interval 14 to 198 (GVIAGVDEVG…KNFAPISRAL (185 aa)). 3 residues coordinate a divalent metal cation: D20, E21, and D112.

The protein belongs to the RNase HII family. Requires Mn(2+) as cofactor. It depends on Mg(2+) as a cofactor.

The protein localises to the cytoplasm. The enzyme catalyses Endonucleolytic cleavage to 5'-phosphomonoester.. Its function is as follows. Endonuclease that specifically degrades the RNA of RNA-DNA hybrids. This chain is Ribonuclease HII, found in Wolbachia pipientis wMel.